The sequence spans 960 residues: Dynamin-like GTPase OPA1, mitochondrial (960 aa).

The N-terminal 87 residues, 1–87 (MWRAGRAALA…TKYGYQPRRN (87 aa)), are a transit peptide targeting the mitochondrion. Over 88–96 (FWPARLAAR) the chain is Mitochondrial matrix. A helical membrane pass occupies residues 97–113 (LLKLRYIILGSAVGGGY). Residues 114–770 (TAKKTFDEWK…NAIENMIGPD (657 aa)) are Mitochondrial intermembrane-facing. A coiled-coil region spans residues 210–254 (SDKEKIDQLQEELLHTQLKYQRILERLEKENKELRKLVLQKDDKG). The LQQQIQ motif signature appears at 217–222 (QLQEEL). Lysine 228 bears the N6-acetyllysine mark. The LQQQIQ motif motif lies at 234-239 (ERLEKE). A Dynamin-type G domain is found at 285 to 561 (QDHLPRVVVV…FWKMVRESVE (277 aa)). Positions 295-302 (GDQSAGKT) are G1 motif. GTP contacts are provided by serine 298, glycine 300, lysine 301, threonine 302, serine 303, and glycine 317. Mg(2+) is bound at residue threonine 302. The segment at 321-324 (MMTR) is G2 motif. The Mg(2+) site is built by threonine 323 and aspartate 398. Residues 398–401 (DLPG) form a G3 motif region. The segment at 467 to 470 (TKVD) is G4 motif. 3 residues coordinate GTP: lysine 468, aspartate 470, and threonine 503. Residues 501 to 504 (VVTG) are G5 motif. Stalk region stretches follow at residues 589–836 (DRNE…IKDT) and 874–928 (CNDV…VKLL). Residues 736–856 (SDKQQWDAAI…KTALNHCNLC (121 aa)) form a paddle region region. An intramembrane segment occupies 771–781 (WKKRWIYWKNR). Topologically, residues 782-960 (TQEQCVHNET…AFIEALHQEK (179 aa)) are mitochondrial intermembrane. A disulfide bridge connects residues cysteine 856 and cysteine 874. Residues 895–960 (RQQLTNTEVR…AFIEALHQEK (66 aa)) adopt a coiled-coil conformation.

The protein belongs to the TRAFAC class dynamin-like GTPase superfamily. Dynamin/Fzo/YdjA family. In terms of assembly, oligomeric complex consisting of membrane-bound and soluble forms of OPA1. Interacts with RCC1L; RCC1L acts as a guanine nucleotide exchange factor (GEF) for OPA1 by exchanging bound GDP for free GTP. Interacts with CHCHD3 and IMMT; these interactions occur preferentially with soluble OPA1 forms. Interacts with PRELID1. Cleaved by OMA1 or YME1L downstream of the transmembrane region in response to different signals to generate soluble forms. Cleaved by OMA1 at position S1 following stress conditions, generating the short soluble form (Dynamin-like GTPase OPA1, short form; S-OPA1). AFG3L2 is involved in the regulation of OMA1-dependent processing of OPA1. PARL-dependent proteolytic processing releases an antiapoptotic soluble form not required for mitochondrial fusion. In terms of processing, cleavage at position S2 by YME1L is required to mediate oxidative phosphorylation (OXPHOS)-induced mitochondrial fusion. Cleavage occurs in the sequence motif Leu-Gln-Gln-Gln-Ile-Gln (LQQQIQ). As to expression, expressed in brain as well as retinal ganglion, starbust amacrine and horizontal cells of the retina. Absent from nerve fibers and photoreceptor cells of the retina.

The protein resides in the mitochondrion inner membrane. The protein localises to the mitochondrion intermembrane space. It catalyses the reaction GTP + H2O = GDP + phosphate + H(+). With respect to regulation, activated by guanine nucleotide exchange factor RCC1L. Dynamin-related GTPase that is essential for normal mitochondrial morphology by mediating fusion of the mitochondrial inner membranes, regulating cristae morphology and maintaining respiratory chain function. Exists in two forms: the transmembrane, long form (Dynamin-like GTPase OPA1, long form; L-OPA1), which is tethered to the inner mitochondrial membrane, and the short soluble form (Dynamin-like GTPase OPA1, short form; S-OPA1), which results from proteolytic cleavage and localizes in the intermembrane space. Both forms (L-OPA1 and S-OPA1) cooperate to catalyze the fusion of the mitochondrial inner membrane. The equilibrium between L-OPA1 and S-OPA1 is essential: excess levels of S-OPA1, produced by cleavage by OMA1 following loss of mitochondrial membrane potential, lead to an impaired equilibrium between L-OPA1 and S-OPA1, inhibiting mitochondrial fusion. The balance between L-OPA1 and S-OPA1 also influences cristae shape and morphology. Involved in remodeling cristae and the release of cytochrome c during apoptosis. Proteolytic processing by PARL in response to intrinsic apoptotic signals may lead to disassembly of OPA1 oligomers and release of the caspase activator cytochrome C (CYCS) into the mitochondrial intermembrane space. Acts as a regulator of T-helper Th17 cells, which are characterized by cells with fused mitochondria with tight cristae, by mediating mitochondrial membrane remodeling: OPA1 is required for interleukin-17 (IL-17) production. Its role in mitochondrial morphology is required for mitochondrial genome maintenance. In terms of biological role, constitutes the transmembrane long form (L-OPA1) that plays a central role in mitochondrial inner membrane fusion and cristae morphology. L-OPA1 and the soluble short form (S-OPA1) form higher-order helical assemblies that coordinate the fusion of mitochondrial inner membranes. Inner membrane-anchored L-OPA1 molecules initiate membrane remodeling by recruiting soluble S-OPA1 to rapidly polymerize into a flexible cylindrical scaffold encaging the mitochondrial inner membrane. Once at the membrane surface, the formation of S-OPA1 helices induce bilayer curvature. OPA1 dimerization through the paddle region, which inserts into cardiolipin-containing membrane, promotes GTP hydrolysis and the helical assembly of a flexible OPA1 lattice on the membrane, which drives membrane curvature and mitochondrial fusion. Plays a role in the maintenance and remodeling of mitochondrial cristae, some invaginations of the mitochondrial inner membrane that provide an increase in the surface area. Probably acts by forming helical filaments at the inside of inner membrane tubes with the shape and dimensions of crista junctions. The equilibrium between L-OPA1 and S-OPA1 influences cristae shape and morphology: increased L-OPA1 levels promote cristae stacking and elongated mitochondria, while increased S-OPA1 levels correlated with irregular cristae packing and round mitochondria shape. Functionally, constitutes the soluble short form (S-OPA1) generated by cleavage by OMA1, which plays a central role in mitochondrial inner membrane fusion and cristae morphology. The transmembrane long form (L-OPA1) and the S-OPA1 form higher-order helical assemblies that coordinate the fusion of mitochondrial inner membranes. Inner membrane-anchored L-OPA1 molecules initiate membrane remodeling by recruiting soluble S-OPA1 to rapidly polymerize into a flexible cylindrical scaffold encaging the mitochondrial inner membrane. Once at the membrane surface, the formation of S-OPA1 helices induce bilayer curvature. OPA1 dimerization through the paddle region, which inserts into cardiolipin-containing membrane, promotes GTP hydrolysis and the helical assembly of a flexible OPA1 lattice on the membrane, which drives membrane curvature and mitochondrial fusion. Excess levels of S-OPA1 produced by cleavage by OMA1 following stress conditions that induce loss of mitochondrial membrane potential, lead to an impaired equilibrium between L-OPA1 and S-OPA1, thereby inhibiting mitochondrial fusion. Involved in mitochondrial safeguard in response to transient mitochondrial membrane depolarization by mediating flickering: cleavage by OMA1 leads to excess production of S-OPA1, preventing mitochondrial hyperfusion. Plays a role in the maintenance and remodeling of mitochondrial cristae, some invaginations of the mitochondrial inner membrane that provide an increase in the surface area. Probably acts by forming helical filaments at the inside of inner membrane tubes with the shape and dimensions of crista junctions. The equilibrium between L-OPA1 and S-OPA1 influences cristae shape and morphology: increased L-OPA1 levels promote cristae stacking and elongated mitochondria, while increased S-OPA1 levels correlated with irregular cristae packing and round mitochondria shape. Its function is as follows. Isoforms that contain the alternative exon 4b are required for mitochondrial genome maintenance, possibly by anchoring the mitochondrial nucleoids to the inner mitochondrial membrane. This is Dynamin-like GTPase OPA1, mitochondrial from Rattus norvegicus (Rat).